Consider the following 347-residue polypeptide: NADH-ubiquinone oxidoreductase chain 2 (347 aa).

Transmembrane regions (helical) follow at residues 3 to 23 (PIIF…VMIS), 25 to 45 (HWLR…PIMM), 66 to 86 (ASML…QWTV), 96 to 116 (MLMT…FWVP), 122 to 142 (IPLS…MSVL), 145 to 165 (ILPS…IMIG), 178 to 198 (IMAY…PYNP), 200 to 220 (MMLL…LLFM), 237 to 257 (MPIM…LPPL), 274 to 294 (NSII…YFYM), and 325 to 345 (LLPT…ILSI).

Belongs to the complex I subunit 2 family. As to quaternary structure, core subunit of respiratory chain NADH dehydrogenase (Complex I) which is composed of 45 different subunits. Interacts with TMEM242.

It is found in the mitochondrion inner membrane. It catalyses the reaction a ubiquinone + NADH + 5 H(+)(in) = a ubiquinol + NAD(+) + 4 H(+)(out). Its function is as follows. Core subunit of the mitochondrial membrane respiratory chain NADH dehydrogenase (Complex I) which catalyzes electron transfer from NADH through the respiratory chain, using ubiquinone as an electron acceptor. Essential for the catalytic activity and assembly of complex I. The sequence is that of NADH-ubiquinone oxidoreductase chain 2 from Capra hircus (Goat).